Here is a 446-residue protein sequence, read N- to C-terminus: Bifunctional protein GlmU (446 aa).

Residues 1 to 226 form a pyrophosphorylase region; it reads MLAVAILAAG…PDEVNGINDR (226 aa). UDP-N-acetyl-alpha-D-glucosamine is bound by residues 7-10, Lys-21, Gln-73, and 78-79; these read LAAG and GT. Mg(2+) is bound at residue Asp-103. UDP-N-acetyl-alpha-D-glucosamine contacts are provided by Gly-140, Glu-155, Asn-170, and Asn-224. Residue Asn-224 participates in Mg(2+) binding. Residues 227 to 247 are linker; it reads CQLANCEALLQERLRNYWMKE. The N-acetyltransferase stretch occupies residues 248–446; it reads GVTFTDPASC…SKQLIKNGWQ (199 aa). UDP-N-acetyl-alpha-D-glucosamine-binding residues include Arg-329 and Lys-347. His-359 functions as the Proton acceptor in the catalytic mechanism. 2 residues coordinate UDP-N-acetyl-alpha-D-glucosamine: Tyr-362 and Asn-373. Residues Ala-376, 382–383, Ala-419, and Arg-436 contribute to the acetyl-CoA site; that span reads NY.

The protein in the N-terminal section; belongs to the N-acetylglucosamine-1-phosphate uridyltransferase family. It in the C-terminal section; belongs to the transferase hexapeptide repeat family. In terms of assembly, homotrimer. Requires Mg(2+) as cofactor.

It is found in the cytoplasm. The enzyme catalyses alpha-D-glucosamine 1-phosphate + acetyl-CoA = N-acetyl-alpha-D-glucosamine 1-phosphate + CoA + H(+). The catalysed reaction is N-acetyl-alpha-D-glucosamine 1-phosphate + UTP + H(+) = UDP-N-acetyl-alpha-D-glucosamine + diphosphate. The protein operates within nucleotide-sugar biosynthesis; UDP-N-acetyl-alpha-D-glucosamine biosynthesis; N-acetyl-alpha-D-glucosamine 1-phosphate from alpha-D-glucosamine 6-phosphate (route II): step 2/2. Its pathway is nucleotide-sugar biosynthesis; UDP-N-acetyl-alpha-D-glucosamine biosynthesis; UDP-N-acetyl-alpha-D-glucosamine from N-acetyl-alpha-D-glucosamine 1-phosphate: step 1/1. It participates in bacterial outer membrane biogenesis; LPS lipid A biosynthesis. Functionally, catalyzes the last two sequential reactions in the de novo biosynthetic pathway for UDP-N-acetylglucosamine (UDP-GlcNAc). The C-terminal domain catalyzes the transfer of acetyl group from acetyl coenzyme A to glucosamine-1-phosphate (GlcN-1-P) to produce N-acetylglucosamine-1-phosphate (GlcNAc-1-P), which is converted into UDP-GlcNAc by the transfer of uridine 5-monophosphate (from uridine 5-triphosphate), a reaction catalyzed by the N-terminal domain. This chain is Bifunctional protein GlmU, found in Prochlorococcus marinus (strain MIT 9313).